We begin with the raw amino-acid sequence, 238 residues long: MKVHLFVTCLIDTMQPNVGKATVEVLERLGVEVEFPESQVCCGQPAFNSGYTKETIKAAKNMIKAFETAEYVVTPSGSCKAMFLEYPQLLKEDPVWSTQAEALAEKTYELTEFIVDILHVTDVGASLKGNATYHTSCHMTRLLRIKEAPFTLLSNVKDLSMTPLPRAENCCGFGGTFSVKMTPISEQMVDEKVQSIEETGAQYIIGADCGCLLNIGGRLNRLDKPIQVMHIAEVLNSR.

Belongs to the LutA/YkgE family.

Its function is as follows. Is involved in L-lactate degradation and allows cells to grow with lactate as the sole carbon source. This chain is Lactate utilization protein A, found in Bacillus pumilus (strain SAFR-032).